The primary structure comprises 348 residues: Putative zinc metalloprotease HP_0258 (348 aa).

Position 16 (histidine 16) interacts with Zn(2+). Glutamate 17 is an active-site residue. Histidine 20 contributes to the Zn(2+) binding site. Transmembrane regions (helical) follow at residues 43–63, 93–113, 247–267, 275–295, and 324–344; these read CFFK…GGYV, WILF…YFFL, LIMG…VGAL, MLLL…LLPI, and LWLA…FNDL. One can recognise a PDZ domain in the interval 106–175; sequence AILVYFFLAL…GELVLEIERN (70 aa).

This sequence belongs to the peptidase M50B family. The cofactor is Zn(2+).

The protein resides in the cell inner membrane. The polypeptide is Putative zinc metalloprotease HP_0258 (Helicobacter pylori (strain ATCC 700392 / 26695) (Campylobacter pylori)).